The primary structure comprises 374 residues: Ribonuclease D (374 aa).

In terms of domain architecture, 3'-5' exonuclease spans 3-171 (YQLITTDDGL…MAIRLVEETT (169 aa)). In terms of domain architecture, HRDC spans 210 to 289 (KGRHLACLQK…AETQTMDAAE (80 aa)).

It belongs to the RNase D family. A divalent metal cation serves as cofactor.

The protein localises to the cytoplasm. It catalyses the reaction Exonucleolytic cleavage that removes extra residues from the 3'-terminus of tRNA to produce 5'-mononucleotides.. Its function is as follows. Exonuclease involved in the 3' processing of various precursor tRNAs. Initiates hydrolysis at the 3'-terminus of an RNA molecule and releases 5'-mononucleotides. The polypeptide is Ribonuclease D (Musicola paradisiaca (strain Ech703) (Dickeya paradisiaca)).